The chain runs to 372 residues: Gibberellin 20 oxidase 1 (372 aa).

In terms of domain architecture, Fe2OG dioxygenase spans 209–309 (RNDSIMRLNY…RRSLAFFLCP (101 aa)). 3 residues coordinate Fe cation: H234, D236, and H290. R300 is a catalytic residue.

It belongs to the iron/ascorbate-dependent oxidoreductase family. GA20OX subfamily. Requires Fe(2+) as cofactor. L-ascorbate serves as cofactor. In terms of tissue distribution, preferentially expressed in reproductive organs. Expressed in the epithelium of embryos and the tapetum of anthers. Expressed at low levels in the shoot apical meristem.

It carries out the reaction gibberellin A12 + 2 2-oxoglutarate + 3 O2 + H(+) = gibberellin A9 + 2 succinate + 3 CO2 + 2 H2O. The catalysed reaction is gibberellin A53 + 2 2-oxoglutarate + 3 O2 + H(+) = gibberellin A20 + 2 succinate + 3 CO2 + 2 H2O. Functionally, key oxidase enzyme in the biosynthesis of gibberellin. Catalyzes the conversion of GA12 and GA53 to GA9 and GA20 respectively, via a three-step oxidation at C-20 of the GA skeleton. This chain is Gibberellin 20 oxidase 1, found in Oryza sativa subsp. japonica (Rice).